A 974-amino-acid chain; its full sequence is Toxin subunit YenC1 (974 aa).

9 RHS repeats span residues 165–179, 290–304, 322–336, 354–368, 398–412, 490–504, 570–584, 596–610, and 630–644; these read AGQC…GLNQ, GVLT…TQRL, FQDL…GNVL, VPEN…YQLV, NYIR…GNLM, SDSE…SQRV, NDEL…IGSS, SQEE…AVWM, and DATG…YYQP. The tract at residues 600 to 680 is RHS-repeat associated core domain; that stretch reads YYPYGGTAVW…PIVLHDPDGL (81 aa). The tract at residues 699 to 940 is cytotoxic necrotising factor domain; it reads ISSLKGTGPF…GEVSASTLLE (242 aa).

The protein belongs to the RHS family. Semipurified toxin complex consists of at least YenA1-YenA2-YenB-YenC1-YenC2-Chi1-Chi2. The Yen-TC:K9 subcomplex is about 26 nm tall and 22 nm in diameter with 5-fold symmetry and 5 copies of YenA1, YenA2, Chi1 and Chi2; the chitinase subunits may be solvent accessible on the exterior the complex. The Yen-TC:K9 subcomplex has no insecticidal activity. The native complex with additional YenB, YenC1 and YenC2 subunits is 16 nm taller and is insecticidal; the toxicity-conferring subunits are present at about 1 copy each.

Its subcellular location is the secreted. Toxin complex is secreted when grown at 25 degrees Celsius or less; at higher temperatures the proteins are present intracellularly but not secreted. Its function is as follows. Part of an orally active toxin complex (TC) with strong insecticidal effects on larvae of the Coleoptera Costelytra zealandica, Acrossidius tasmania and Adoryphorus couloni and some Lepidoptera larvae. The TC has an endochitinase activity. This Yersinia entomophaga protein is Toxin subunit YenC1.